We begin with the raw amino-acid sequence, 430 residues long: Small ribosomal subunit protein uS5m (430 aa).

Residues 108-128 (AGARKGRGKRTKRKRRKDLNR) are disordered. The span at 111 to 125 (RKGRGKRTKRKRRKD) shows a compositional bias: basic residues. The S5 DRBM domain occupies 218 to 282 (FDTRILEVRN…NRAVHYLHYI (65 aa)).

This sequence belongs to the universal ribosomal protein uS5 family. In terms of assembly, component of the mitochondrial ribosome small subunit (28S) which comprises a 12S rRNA and about 30 distinct proteins.

The protein localises to the mitochondrion. This chain is Small ribosomal subunit protein uS5m (MRPS5), found in Bos taurus (Bovine).